The primary structure comprises 132 residues: Protein NrdI (132 aa).

Belongs to the NrdI family.

In terms of biological role, probably involved in ribonucleotide reductase function. This Staphylococcus epidermidis (strain ATCC 35984 / DSM 28319 / BCRC 17069 / CCUG 31568 / BM 3577 / RP62A) protein is Protein NrdI.